The sequence spans 301 residues: Glycine--tRNA ligase alpha subunit (301 aa).

This sequence belongs to the class-II aminoacyl-tRNA synthetase family. As to quaternary structure, tetramer of two alpha and two beta subunits.

It localises to the cytoplasm. The enzyme catalyses tRNA(Gly) + glycine + ATP = glycyl-tRNA(Gly) + AMP + diphosphate. The chain is Glycine--tRNA ligase alpha subunit from Shewanella baltica (strain OS223).